The primary structure comprises 229 residues: Chloride conductance regulatory protein ICln (229 aa).

Belongs to the pICln (TC 1.A.47) family. In terms of assembly, homooligomer.

It localises to the cytoplasm. The protein resides in the nucleus. In terms of biological role, may participate in cellular volume control by activation of a swelling-induced chloride conductance pathway. The sequence is that of Chloride conductance regulatory protein ICln from Arabidopsis thaliana (Mouse-ear cress).